The following is a 209-amino-acid chain: Ras-like GTP-binding protein RYL2 (209 aa).

Residue Gly-12–Thr-19 coordinates GTP. Residues Gln-34–Phe-42 carry the Effector region motif. GTP-binding positions include Asp-60–Gln-64 and Thr-118–Asp-121. 2 S-geranylgeranyl cysteine lipidation sites follow: Cys-208 and Cys-209.

This sequence belongs to the small GTPase superfamily. Rab family.

It is found in the cell membrane. Functionally, protein transport. Probably involved in vesicular traffic. The sequence is that of Ras-like GTP-binding protein RYL2 (RYL2) from Yarrowia lipolytica (strain CLIB 122 / E 150) (Yeast).